The following is a 62-amino-acid chain: MDEKLSRVDPKLLELLVCPLSKGRLSYDREHNELVSEKARLAYPIRDGIPIMLVSEARRLDE.

Belongs to the UPF0434 family.

In Rhizobium etli (strain CIAT 652), this protein is UPF0434 protein RHECIAT_CH0004260.